Reading from the N-terminus, the 388-residue chain is Acetate kinase (388 aa).

Residue Asn-8 participates in Mg(2+) binding. Lys-15 lines the ATP pocket. Residue Arg-88 coordinates substrate. The active-site Proton donor/acceptor is Asp-144. ATP contacts are provided by residues His-202–Gly-206, Asp-276–Arg-278, and Gly-321–Asn-325. Position 375 (Glu-375) interacts with Mg(2+).

Belongs to the acetokinase family. In terms of assembly, homodimer. Mg(2+) serves as cofactor. Requires Mn(2+) as cofactor.

It localises to the cytoplasm. The catalysed reaction is acetate + ATP = acetyl phosphate + ADP. Its pathway is metabolic intermediate biosynthesis; acetyl-CoA biosynthesis; acetyl-CoA from acetate: step 1/2. Its function is as follows. Catalyzes the formation of acetyl phosphate from acetate and ATP. Can also catalyze the reverse reaction. This is Acetate kinase from Mycoplasmoides gallisepticum (strain R(low / passage 15 / clone 2)) (Mycoplasma gallisepticum).